A 90-amino-acid polypeptide reads, in one-letter code: Probable Fe(2+)-trafficking protein (90 aa).

This sequence belongs to the Fe(2+)-trafficking protein family.

In terms of biological role, could be a mediator in iron transactions between iron acquisition and iron-requiring processes, such as synthesis and/or repair of Fe-S clusters in biosynthetic enzymes. The polypeptide is Probable Fe(2+)-trafficking protein (Nitrosococcus oceani (strain ATCC 19707 / BCRC 17464 / JCM 30415 / NCIMB 11848 / C-107)).